A 417-amino-acid polypeptide reads, in one-letter code: MFPRDARLDMYDPELAKAIAAEVRRQEDHVELIASENYCSTLVMQVQGSQLTNKYAEGYSGKRYYGGCEYVDIAEQLAIERAKQLFGADYANVQPHSGSQANQAVYFALLQPGDTILGMSLAHGGHLTHGANVNVSGKLFNAVQYGVNAQGLIDYEAVESLALEHRPKMVVAGFSAYSQKIDWVRFRAIADQVGAYLLVDMAHVAGLVAAGVYPNPLPHAHVVTSTTHKTLRGPRGGIIVAQAPQEALVKKLQSIVFPGIQGGPLMHVIAAKAVAFKEALEPAFKVYQQQVVKNAKAMAETLMLRGYKIVSGGTENHLMLVDMIGRDVSGRDAEGALGQAHITVNKNAVPDDPRSPFVTSGLRLGTPAVTTRGYQEQDCVDLAHWIADVLDAPADATVIAAVREKVAAQCKKYPVYR.

(6S)-5,6,7,8-tetrahydrofolate contacts are provided by residues Leu121 and Gly125–Leu127. At Lys229 the chain carries N6-(pyridoxal phosphate)lysine. Ser355 to Phe357 provides a ligand contact to (6S)-5,6,7,8-tetrahydrofolate.

It belongs to the SHMT family. As to quaternary structure, homodimer. Requires pyridoxal 5'-phosphate as cofactor.

It localises to the cytoplasm. The catalysed reaction is (6R)-5,10-methylene-5,6,7,8-tetrahydrofolate + glycine + H2O = (6S)-5,6,7,8-tetrahydrofolate + L-serine. Its pathway is one-carbon metabolism; tetrahydrofolate interconversion. It functions in the pathway amino-acid biosynthesis; glycine biosynthesis; glycine from L-serine: step 1/1. In terms of biological role, catalyzes the reversible interconversion of serine and glycine with tetrahydrofolate (THF) serving as the one-carbon carrier. This reaction serves as the major source of one-carbon groups required for the biosynthesis of purines, thymidylate, methionine, and other important biomolecules. Also exhibits THF-independent aldolase activity toward beta-hydroxyamino acids, producing glycine and aldehydes, via a retro-aldol mechanism. This chain is Serine hydroxymethyltransferase, found in Xylella fastidiosa (strain M12).